Consider the following 2016-residue polypeptide: Sodium channel protein type 5 subunit alpha (2016 aa).

At 1-129 (MANFLLPRGT…IRRAAVKILV (129 aa)) the chain is on the cytoplasmic side. The tract at residues 28–56 (MAEKQARGSTTLQESREGLPEEEAPRPQL) is disordered. Phosphoserine is present on Ser36. Phosphothreonine is present on Thr38. Residues 41-52 (ESREGLPEEEAP) show a composition bias toward basic and acidic residues. One copy of the I repeat lies at 113–420 (VLSPFHPIRR…VVAMAYEEQN (308 aa)). Residues 130 to 149 (HSLFNMLIMCTILTNCVFMA) traverse the membrane as a helical segment. The Extracellular segment spans residues 150–157 (QHDPPPWT). Residues 158-179 (KYVEYTFTAIYTFESLVKILAR) traverse the membrane as a helical segment. The Cytoplasmic portion of the chain corresponds to 180–188 (GFCLHAFTF). The chain crosses the membrane as a helical span at residues 189–209 (LRDPWNWLDFSVIIMAYTTEF). Residues 210-216 (VDLGNVS) lie on the Extracellular side of the membrane. The N-linked (GlcNAc...) asparagine glycan is linked to Asn214. Residues 217-236 (ALRTFRVLRALKTISVISGL) traverse the membrane as a helical segment. Topologically, residues 237 to 249 (KTIVGALIQSVKK) are cytoplasmic. The chain crosses the membrane as a helical span at residues 250-272 (LADVMVLTVFCLSVFALIGLQLF). The Extracellular portion of the chain corresponds to 273–357 (MGNLRHKCVR…PDHGYTSFDS (85 aa)). Cys280 and Cys335 form a disulfide bridge. 5 N-linked (GlcNAc...) asparagine glycosylation sites follow: Asn283, Asn288, Asn291, Asn318, and Asn328. The segment at residues 358 to 378 (FAWAFLALFRLMTQDCWERLY) is an intramembrane region (pore-forming). Over 379 to 386 (QQTLRSAG) the chain is Extracellular. The chain crosses the membrane as a helical span at residues 387–413 (KIYMIFFMLVIFLGSFYLVNLILAVVA). The Cytoplasmic segment spans residues 414 to 719 (MAYEEQNQAT…VKLVVMDPFT (306 aa)). Ser457, Ser460, Ser483, and Ser484 each carry phosphoserine. The interval 461–591 (LEMSPLAPVN…APGHALHGKK (131 aa)) is disordered. The residue at position 486 (Thr486) is a Phosphothreonine. A compositionally biased stretch (basic and acidic residues) spans 491–503 (EDRLPKSDSEDGP). Phosphoserine is present on residues Ser497 and Ser510. The segment covering 509–528 (LSLTRGLSRTSMKPRSSRGS) has biased composition (polar residues). Residues Arg513 and Arg526 each carry the dimethylated arginine; alternate modification. An omega-N-methylarginine; alternate mark is found at Arg513 and Arg526. A phosphoserine mark is found at Ser539, Ser571, Ser664, and Ser667. The segment covering 570–580 (TSAQGQPSPGT) has biased composition (polar residues). Dimethylated arginine; alternate is present on Arg680. Arg680 is subject to Omega-N-methylarginine; alternate. An II repeat occupies 699-969 (CCPLWMSIKQ…QLALARIQRG (271 aa)). A helical membrane pass occupies residues 720–737 (DLTITMCIVLNTLFMALE). Residues 738 to 746 (HYNMTSEFE) are Extracellular-facing. N-linked (GlcNAc...) asparagine glycosylation is present at Asn740. A helical membrane pass occupies residues 747–769 (EMLQVGNLVFTGIFTAEMTFKII). Topologically, residues 770 to 775 (ALDPYY) are cytoplasmic. Residues 776–796 (YFQQGWNIFDSIIVILSLMEL) form a helical membrane-spanning segment. Topologically, residues 797–806 (GLSRMSNLSV) are extracellular. N-linked (GlcNAc...) asparagine glycosylation is present at Asn803. The chain crosses the membrane as a helical span at residues 807-821 (LRSFRLLRVFKLAKS). Residues 822–838 (WPTLNTLIKIIGNSVGA) are Cytoplasmic-facing. The chain crosses the membrane as a helical span at residues 839–860 (LGNLTLVLAIIVFIFAVVGMQL). At 861-884 (FGKNYSELRDSDSGLLPRWHMMDF) the chain is on the extracellular side. Residue Asn864 is glycosylated (N-linked (GlcNAc...) asparagine). The segment at residues 885-903 (FHAFLIIFRILCGEWIETM) is an intramembrane region (pore-forming). Residues 904-912 (WDCMEVSGQ) lie on the Extracellular side of the membrane. An intrachain disulfide couples Cys906 to Cys915. Residues 913 to 941 (SLCLLVFLLVMVIGNLVVLNLFLALLLSS) form a helical membrane-spanning segment. Topologically, residues 942–1203 (FSADNLTAPD…LRKTCYHIVE (262 aa)) are cytoplasmic. The tract at residues 1005 to 1141 (IATPYSPPPP…PEDSCSEGST (137 aa)) is disordered. Residues 1015 to 1030 (ETEKVPPTRKETRFEE) show a composition bias toward basic and acidic residues. Residues 1033–1044 (QPGQGTPGDPEP) show a composition bias toward low complexity. Residues 1054–1071 (SDTDDQEEDEENSLGTEE) are compositionally biased toward acidic residues. Low complexity predominate over residues 1096-1113 (SQVSATASSEAEASASQA). Residues 1187 to 1501 (PGKVWWRLRK…KKYYNAMKKL (315 aa)) form an III repeat. Residues 1204–1225 (HSWFETFIIFMILLSSGALAFE) form a helical membrane-spanning segment. At 1226–1236 (DIYLEERKTIK) the chain is on the extracellular side. The helical transmembrane segment at 1237–1259 (VLLEYADKMFTYVFVLEMLLKWV) threads the bilayer. The Cytoplasmic portion of the chain corresponds to 1260 to 1268 (AYGFKKYFT). The chain crosses the membrane as a helical span at residues 1269-1291 (NAWCWLDFLIVDVSLVSLVANTL). Over 1292–1297 (GFAEMG) the chain is Extracellular. Residues 1298–1317 (PIKSLRTLRALRPLRALSRF) traverse the membrane as a helical segment. Residues 1318–1330 (EGMRVVVNALVGA) are Cytoplasmic-facing. The helical transmembrane segment at 1331–1355 (IPSIMNVLLVCLIFWLIFSIMGVNL) threads the bilayer. The Extracellular portion of the chain corresponds to 1356 to 1400 (FAGKFGRCINQTEGDLPLNYTIVNNKSQCESLNLTGELYWTKVKV). N-linked (GlcNAc...) asparagine glycosylation is found at Asn1365, Asn1374, Asn1380, and Asn1388. Positions 1401–1422 (NFDNVGAGYLALLQVATFKGWM) form an intramembrane region, pore-forming. Residues 1423 to 1445 (DIMYAAVDSRGYEEQPQWEYNLY) lie on the Extracellular side of the membrane. A helical membrane pass occupies residues 1446–1470 (MYIYFVIFIIFGSFFTLNLFIGVII). At 1471 to 1528 (DNFNQQKKKLGGQDIFMTEEQKKYYNAMKKLGSKKPQKPIPRPLNKYQGFIFDIVTKQ) the chain is on the cytoplasmic side. Phosphoserine; by PKC is present on Ser1503. Residues 1510-1807 (IPRPLNKYQG…WEKFDPEATQ (298 aa)) form an IV repeat. The chain crosses the membrane as a helical span at residues 1529–1547 (AFDVTIMFLICLNMVTMMV). Over 1548 to 1558 (ETDDQSPEKIN) the chain is Extracellular. The chain crosses the membrane as a helical span at residues 1559 to 1580 (ILAKINLLFVAIFTGECIVKLA). At 1581–1589 (ALRHYYFTN) the chain is on the cytoplasmic side. Residues 1590-1612 (SWNIFDFVVVILSIVGTVLSDII) traverse the membrane as a helical segment. Over 1613–1619 (QKYFFSP) the chain is Extracellular. Residues 1620 to 1640 (TLFRVIRLARIGRILRLIRGA) form a helical membrane-spanning segment. Residues 1641 to 1650 (KGIRTLLFAL) lie on the Cytoplasmic side of the membrane. The helical transmembrane segment at 1651–1679 (MMSLPALFNIGLLLFLVMFIYSIFGMANF) threads the bilayer. Topologically, residues 1680 to 1697 (AYVKWEAGIDDMFNFQTF) are extracellular. The pore-forming intramembrane region spans 1698 to 1714 (ANSMLCLFQITTSAGWD). The Extracellular portion of the chain corresponds to 1715-1745 (GLLSPILNTGPPYCDPTLPNSNGSRGDCGSP). Residue Asn1736 is glycosylated (N-linked (GlcNAc...) asparagine). The helical transmembrane segment at 1746–1771 (AVGILFFTTYIIISFLIVVNMYIAII) threads the bilayer. The Cytoplasmic portion of the chain corresponds to 1772 to 2016 (LENFSVATEE…SPDRDRESIV (245 aa)). Residues 1839–1901 (DLPMVSGDRI…ITTTLRRKHE (63 aa)) form an interaction with FGF13 region. One can recognise an IQ domain in the interval 1901–1930 (EEVSAMVIQRAFRRHLLQRSLKHASFLFRQ). The segment covering 1959–1979 (PLGPPSSSSISSTSFPPSYDS) has biased composition (low complexity). A disordered region spans residues 1959-2016 (PLGPPSSSSISSTSFPPSYDSVTRATSDNLQVRGSDYSHSEDLADFPPSPDRDRESIV). An interaction with NEDD4, NEDD4L and WWP2 region spans residues 1974-1977 (PPSY). The span at 1981–1990 (TRATSDNLQV) shows a compositional bias: polar residues.

It belongs to the sodium channel (TC 1.A.1.10) family. Nav1.5/SCN5A subfamily. Cannot form the same regulatory interactions with beta subunits as other Navs do. Interacts with the PDZ domain of the syntrophin SNTA1, SNTB1 and SNTB2. Interacts with NEDD4, NEDD4L, WWP2 and GPD1L. Interacts with CALM. Interacts with FGF13; the interaction is direct and FGF13 may regulate SNC5A density at membranes and function. May also interact with FGF12 and FGF14. Interacts with TMEM233. Interacts with the spider Jingzhaotoxin-I (AC P83974, AC B1P1B7, AC B1P1B8). Interacts with ANK3. Interacts with PKP2 (via N-terminus). Interacts with XIRP2; the interaction is required for normal action potential configuration in the heart. Ubiquitinated by NEDD4L; which promotes its endocytosis. Does not seem to be ubiquitinated by NEDD4 or WWP2. In terms of processing, phosphorylation at Ser-1503 by PKC in a highly conserved cytoplasmic loop slows inactivation of the sodium channel and reduces peak sodium currents. Regulated through phosphorylation by CaMK2D. Post-translationally, lacks the cysteine which covalently binds the conotoxin GVIIJ. This cysteine (position 868) is speculated in other sodium channel subunits alpha to be implied in covalent binding with the sodium channel subunit beta-2 or beta-4. N-glycosylated at Asn-318, probably hinders potential interaction with regulatory subunits. In terms of tissue distribution, found in jejunal circular smooth muscle cells (at protein level). Expressed in human atrial and ventricular cardiac muscle but not in adult skeletal muscle, brain, myometrium, liver, or spleen. Isoform 4 is expressed in brain.

It is found in the cell membrane. The protein localises to the cytoplasm. The protein resides in the perinuclear region. It localises to the sarcolemma. Its subcellular location is the T-tubule. It is found in the cell junction. It carries out the reaction Na(+)(in) = Na(+)(out). With respect to regulation, channel inactivation is regulated by intracellular calcium levels. It is a tetrodotoxin-resistant voltage-gated Na(+) channel (Nav). Its function is as follows. Pore-forming subunit of Nav1.5, a voltage-gated sodium (Nav) channel that directly mediates the depolarizing phase of action potentials in excitable membranes. Navs, also called VGSCs (voltage-gated sodium channels) or VDSCs (voltage-dependent sodium channels), operate by switching between closed and open conformations depending on the voltage difference across the membrane. In the open conformation they allow Na(+) ions to selectively pass through the pore, along their electrochemical gradient. The influx of Na(+) ions provokes membrane depolarization, initiating the propagation of electrical signals throughout cells and tissues. Nav1.5 is the predominant sodium channel expressed in myocardial cells and it is responsible for the initial upstroke of the action potential in cardiac myocytes, thereby initiating the heartbeat. Required for normal electrical conduction including formation of the infranodal ventricular conduction system and normal action potential configuration, as a result of its interaction with XIRP2. The chain is Sodium channel protein type 5 subunit alpha from Homo sapiens (Human).